The following is a 209-amino-acid chain: Large ribosomal subunit protein uL3 (209 aa).

A disordered region spans residues Q128–N152.

It belongs to the universal ribosomal protein uL3 family. Part of the 50S ribosomal subunit. Forms a cluster with proteins L14 and L19.

Its function is as follows. One of the primary rRNA binding proteins, it binds directly near the 3'-end of the 23S rRNA, where it nucleates assembly of the 50S subunit. This chain is Large ribosomal subunit protein uL3, found in Halalkalibacterium halodurans (strain ATCC BAA-125 / DSM 18197 / FERM 7344 / JCM 9153 / C-125) (Bacillus halodurans).